Consider the following 61-residue polypeptide: Cobrotoxin-c (61 aa).

4 cysteine pairs are disulfide-bonded: cysteine 3–cysteine 23, cysteine 17–cysteine 40, cysteine 42–cysteine 53, and cysteine 54–cysteine 59.

Belongs to the three-finger toxin family. Short-chain subfamily. Type I alpha-neurotoxin sub-subfamily. Expressed by the venom gland.

The protein localises to the secreted. Its function is as follows. Produces peripheral paralysis by blocking neuromuscular transmission at the postsynaptic site. Binds to the nicotinic acetylcholine receptor. The sequence is that of Cobrotoxin-c from Naja kaouthia (Monocled cobra).